The primary structure comprises 652 residues: Threonine--tRNA ligase (652 aa).

The TGS domain occupies 1-64 (MPDVIRITFP…HEDGELVIIT (64 aa)). A catalytic region spans residues 245–542 (DHRKLGKELE…LIEEYKGAFP (298 aa)). Zn(2+) is bound by residues C338, H389, and H519.

Belongs to the class-II aminoacyl-tRNA synthetase family. Homodimer. The cofactor is Zn(2+).

The protein localises to the cytoplasm. It catalyses the reaction tRNA(Thr) + L-threonine + ATP = L-threonyl-tRNA(Thr) + AMP + diphosphate + H(+). Functionally, catalyzes the attachment of threonine to tRNA(Thr) in a two-step reaction: L-threonine is first activated by ATP to form Thr-AMP and then transferred to the acceptor end of tRNA(Thr). Also edits incorrectly charged L-seryl-tRNA(Thr). The sequence is that of Threonine--tRNA ligase from Geobacillus kaustophilus (strain HTA426).